We begin with the raw amino-acid sequence, 300 residues long: Ribosomal protein L11 methyltransferase (300 aa).

4 residues coordinate S-adenosyl-L-methionine: threonine 141, glycine 164, aspartate 186, and asparagine 233.

It belongs to the methyltransferase superfamily. PrmA family.

It localises to the cytoplasm. The catalysed reaction is L-lysyl-[protein] + 3 S-adenosyl-L-methionine = N(6),N(6),N(6)-trimethyl-L-lysyl-[protein] + 3 S-adenosyl-L-homocysteine + 3 H(+). Methylates ribosomal protein L11. In Synechocystis sp. (strain ATCC 27184 / PCC 6803 / Kazusa), this protein is Ribosomal protein L11 methyltransferase.